Consider the following 39-residue polypeptide: Photosystem II reaction center protein J (39 aa).

A helical transmembrane segment spans residues 9 to 29; sequence LWLVATVGGMAAITVLGIFIY.

It belongs to the PsbJ family. In terms of assembly, PSII is composed of 1 copy each of membrane proteins PsbA, PsbB, PsbC, PsbD, PsbE, PsbF, PsbH, PsbI, PsbJ, PsbK, PsbL, PsbM, PsbT, PsbX, PsbY, PsbZ, Psb30/Ycf12, at least 3 peripheral proteins of the oxygen-evolving complex and a large number of cofactors. It forms dimeric complexes.

The protein resides in the plastid. The protein localises to the chloroplast thylakoid membrane. Functionally, one of the components of the core complex of photosystem II (PSII). PSII is a light-driven water:plastoquinone oxidoreductase that uses light energy to abstract electrons from H(2)O, generating O(2) and a proton gradient subsequently used for ATP formation. It consists of a core antenna complex that captures photons, and an electron transfer chain that converts photonic excitation into a charge separation. The chain is Photosystem II reaction center protein J from Porphyra purpurea (Red seaweed).